The sequence spans 530 residues: Cation channel sperm-associated protein 2 (530 aa).

The Cytoplasmic portion of the chain corresponds to 1–108; the sequence is MAAYQQEEQM…LWAGWVLECP (108 aa). The chain crosses the membrane as a helical span at residues 109–131; sequence LFKNFIIFLVFLNTIILMVEIEL. Topologically, residues 132–140 are extracellular; the sequence is LESTNTKLW. The chain crosses the membrane as a helical span at residues 141-166; the sequence is PLKLTLEVAAWFILLIFILEILLKWL. Over 167–175 the chain is Cytoplasmic; it reads SNFSVFWKS. A helical transmembrane segment spans residues 176–200; sequence AWNVFDFVVTMLSLLPEVVVLVGVT. At 201-203 the chain is on the extracellular side; that stretch reads GQS. The helical transmembrane segment at 204-222 threads the bilayer; that stretch reads VWLQLLRICRVLRSLKLLA. Residues 223–239 are Cytoplasmic-facing; sequence QFRQIQIIILVLVRALK. Residues 240–262 form a helical membrane-spanning segment; sequence SMTFLLMLLLIFFYIFAVTGVYV. Residues 263-281 lie on the Extracellular side of the membrane; sequence FSEYTRSPRQDLEYHVFFS. An intramembrane region (helical; Pore-forming) is located at residues 282–294; it reads DLPNSLVTVFILF. Residues 295-314 lie on the Extracellular side of the membrane; that stretch reads TLDHWYALLQDVWKVPEVSR. A helical transmembrane segment spans residues 315–341; it reads IFSSIYFILWLLLGSIIFRSIIVAMMV. Over 342-530 the chain is Cytoplasmic; sequence TNFQNIRKEL…VQALMNLEDK (189 aa). A disordered region spans residues 378 to 458; sequence MSHEALTSSH…TSSSYSSSSE (81 aa). Basic and acidic residues predominate over residues 429–440; that stretch reads KTEETLSKKREY. Low complexity predominate over residues 442-458; sequence SSSCVSSTSSSYSSSSE.

It belongs to the cation channel sperm-associated (TC 1.A.1.19) family. As to quaternary structure, component of the CatSper complex or CatSpermasome composed of the core pore-forming members CATSPER1, CATSPER2, CATSPER3 and CATSPER4 as well as auxiliary members CATSPERB, CATSPERG, CATSPERD, CATSPERE, CATSPERZ, C2CD6/CATSPERT, TMEM249, TMEM262 and EFCAB9. HSPA1 may be an additional auxiliary complex member. The core complex members CATSPER1, CATSPER2, CATSPER3 and CATSPER4 form a heterotetrameric channel. The auxiliary CATSPERB, CATSPERG, CATSPERD and CATSPERE subunits form a pavilion-like structure over the pore which stabilizes the complex through interactions with CATSPER4, CATSPER3, CATSPER1 and CATSPER2 respectively. TMEM262/CATSPERH interacts with CATSPERB, further stabilizing the complex. C2CD6/CATSPERT interacts at least with CATSPERD and is required for targeting the CatSper complex in the flagellar membrane. Interacts with Ca(v)3.3/CACNA1I, leading to suppression of T-type calcium channel activity. In terms of tissue distribution, testis-specific.

It is found in the cell projection. It localises to the cilium. Its subcellular location is the flagellum membrane. The enzyme catalyses Ca(2+)(in) = Ca(2+)(out). Its activity is regulated as follows. The CatSper calcium channel is indirectly activated by extracellular progesterone and prostaglandins following the sequence: progesterone &gt; PGF1-alpha = PGE1 &gt; PGA1 &gt; PGE2 &gt;&gt; PGD2. The CatSper calcium channel is directly inhibited by endocannabinoid 2-arachidonoylglycerol (2AG). Indirect activation by progesterone takes place via the following mechanism: progesterone binds and activates the acylglycerol lipase ABHD2, which in turn mediates hydrolysis of 2AG inhibitor, relieving inhibition of the CatSper channel. The primary effect of progesterone activation is to shift voltage dependence towards more physiological, negative membrane potentials; it is not mediated by metabotropic receptors and second messengers. Sperm capacitation enhances the effect of progesterone by providing additional negative shift. Also activated by the elevation of intracellular pH. Its function is as follows. Pore-forming subunit of the CatSper complex, a sperm-specific voltage-gated calcium channel, that plays a central role in calcium-dependent physiological responses essential for successful fertilization, such as sperm hyperactivation, acrosome reaction and chemotaxis towards the oocyte. In Homo sapiens (Human), this protein is Cation channel sperm-associated protein 2 (CATSPER2).